The chain runs to 279 residues: Methyltransferase trt5 (279 aa).

S-adenosyl-L-methionine-binding positions include Asp-124–Ile-125 and Asp-152–Val-153.

The protein belongs to the class I-like SAM-binding methyltransferase superfamily. Homodimer.

It functions in the pathway secondary metabolite biosynthesis; terpenoid biosynthesis. In terms of biological role, methyltransferase; part of the gene cluster that mediates the biosynthesis of terretonin, a fungal meroterpenoid that acts as a mycotoxin. The first step of the pathway is the synthesis of 3,5-dimethylorsellinic acid (DMOA) by the polyketide synthase trt4. DMOA is then prenylated into farnesyl-DMOA by the polyprenyl transferase trt2. Methylation by the methyltransferase trt5 then leads to farnesyl-DMOA methyl ester which is further subject to epoxidation by the FAD-dependent monooxygenase trt8 to yield epoxyfarnesyl-DMOA methyl ester. Cyclization of epoxyfarnesyl-DMOA methyl ester by the terpene cyclase trt1 leads to a tetracycle intermediate which is in turn converted to preterretonin. Dehydrogenase trt9 comes next to transform preterretonin to preterrenoid. The FAD-dependent monooxygenase trt3 is then required for the C-hydroxylation at C16 of preterrenoid to yield terrenoid. The cytochrome P450 trt6 catalyzes three successive oxidations to transform terrenoid into an unstable intermediate, which then undergoes the D-ring expansion and unusual rearrangement of the methoxy group to afford the core skeleton of terretonin. Trt14 catalyzes the D-ring expansion of terretonin involving intramolecular methoxy rearrangement as well as the hydrolysis of the expanded D-ring and the methyl ester moiety. Finally, the nonheme iron-dependent dioxygenase trt7 accomplishes the last two oxidation reactions steps to complete the biosynthesis of terretonin. Terretonin C is produced via spontaneous decarboxylation of the terretonin precursor. Another shunt product of the terretonin biosynthesis is dihydrofarnesyl-DMOA, derived from epoxyfarnesyl-DMOA through hydrolysis of the epoxide. The protein is Methyltransferase trt5 of Aspergillus terreus (strain NIH 2624 / FGSC A1156).